The chain runs to 151 residues: Putative transcriptional regulatory protein TK2151 (151 aa).

The protein belongs to the Tfx family.

Putative transcriptional regulator. This chain is Putative transcriptional regulatory protein TK2151, found in Thermococcus kodakarensis (strain ATCC BAA-918 / JCM 12380 / KOD1) (Pyrococcus kodakaraensis (strain KOD1)).